The sequence spans 127 residues: Large ribosomal subunit protein bL12 (127 aa).

It belongs to the bacterial ribosomal protein bL12 family. Homodimer. Part of the ribosomal stalk of the 50S ribosomal subunit. Forms a multimeric L10(L12)X complex, where L10 forms an elongated spine to which 2 to 4 L12 dimers bind in a sequential fashion. Binds GTP-bound translation factors.

Functionally, forms part of the ribosomal stalk which helps the ribosome interact with GTP-bound translation factors. Is thus essential for accurate translation. The sequence is that of Large ribosomal subunit protein bL12 from Bordetella bronchiseptica (strain ATCC BAA-588 / NCTC 13252 / RB50) (Alcaligenes bronchisepticus).